Reading from the N-terminus, the 312-residue chain is Carbamate kinase 2 (312 aa).

The protein belongs to the carbamate kinase family.

The protein localises to the cytoplasm. The catalysed reaction is hydrogencarbonate + NH4(+) + ATP = carbamoyl phosphate + ADP + H2O + H(+). Its pathway is metabolic intermediate metabolism; carbamoyl phosphate degradation; CO(2) and NH(3) from carbamoyl phosphate: step 1/1. The protein is Carbamate kinase 2 (arcC2) of Enterococcus faecalis (strain ATCC 700802 / V583).